The following is a 240-amino-acid chain: ATP-dependent dethiobiotin synthetase BioD (240 aa).

Residue 13–18 (GVGKTI) coordinates ATP. Threonine 17 provides a ligand contact to Mg(2+). Residue lysine 38 is part of the active site. Threonine 42 is a substrate binding site. ATP contacts are provided by residues aspartate 55, 116–119 (EGVG), and 214–216 (PYL). Mg(2+) is bound by residues aspartate 55 and glutamate 116.

Belongs to the dethiobiotin synthetase family. In terms of assembly, homodimer. It depends on Mg(2+) as a cofactor.

It is found in the cytoplasm. It catalyses the reaction (7R,8S)-7,8-diammoniononanoate + CO2 + ATP = (4R,5S)-dethiobiotin + ADP + phosphate + 3 H(+). The protein operates within cofactor biosynthesis; biotin biosynthesis; biotin from 7,8-diaminononanoate: step 1/2. In terms of biological role, catalyzes a mechanistically unusual reaction, the ATP-dependent insertion of CO2 between the N7 and N8 nitrogen atoms of 7,8-diaminopelargonic acid (DAPA, also called 7,8-diammoniononanoate) to form a ureido ring. This is ATP-dependent dethiobiotin synthetase BioD from Thermodesulfovibrio yellowstonii (strain ATCC 51303 / DSM 11347 / YP87).